Here is a 174-residue protein sequence, read N- to C-terminus: Bacterial proteasome activator (174 aa).

Disordered regions lie at residues 1–37 (MNND…PSLT) and 153–174 (SALP…GQYL). A compositionally biased stretch (gly residues) spans 160 to 174 (GKPGQAGGQGTGQYL). The HbYX motif signature appears at 172–174 (QYL).

This sequence belongs to the Bpa family. As to quaternary structure, forms a homooligomeric, either hexameric or heptameric, ring-like structure which stacks co-axially with the proteasomal alpha-rings.

In terms of biological role, interacts with the core proteasome alpha-subunit (PrcA) through its C-terminal hydrophobic-tyrosine-X motif (HbYX motif). Interaction of Bpa with the proteasome stimulates proteasomal peptidase and casein degradation activity, which suggests Bpa could play a role in the removal of non-native or damaged proteins by influencing the conformation of the proteasome complex upon interaction. This chain is Bacterial proteasome activator (bpa), found in Mycobacterium leprae (strain TN).